The primary structure comprises 469 residues: 6-phosphofructo-2-kinase/fructose-2,6-bisphosphatase 4 (469 aa).

Residues 1–249 (MASPRELTQN…YYLMNIHVTP (249 aa)) are 6-phosphofructo-2-kinase. Residue S29 is modified to Phosphoserine; by PKC. 46-54 (GLPARGKTY) serves as a coordination point for ATP. 2 residues coordinate beta-D-fructose 6-phosphate: R79 and R103. D129 is an active-site residue. Beta-D-fructose 6-phosphate-binding residues include T131 and R137. C159 is a catalytic residue. 168–173 (NIVQVK) lines the ATP pocket. Residues K173, R194, and Y198 each coordinate beta-D-fructose 6-phosphate. The segment at 250–469 (RSIYLCRHGE…EALVTVPAHQ (220 aa)) is fructose-2,6-bisphosphatase. R256 is a beta-D-fructose 2,6-bisphosphate binding site. H257 (tele-phosphohistidine intermediate) is an active-site residue. 3 residues coordinate beta-D-fructose 2,6-bisphosphate: N263, G269, and R306. E326 (proton donor/acceptor) is an active-site residue. Residues Y337, R351, K355, Y366, Q392, and R396 each contribute to the beta-D-fructose 2,6-bisphosphate site. 348–351 (FALR) contacts ATP. Residues 392–396 (QAVMR) and Y428 each bind ATP. Position 444 is a phosphothreonine; by PKC (T444).

The protein in the C-terminal section; belongs to the phosphoglycerate mutase family. Homodimer. In terms of tissue distribution, testis.

The enzyme catalyses beta-D-fructose 2,6-bisphosphate + H2O = beta-D-fructose 6-phosphate + phosphate. It catalyses the reaction beta-D-fructose 6-phosphate + ATP = beta-D-fructose 2,6-bisphosphate + ADP + H(+). With respect to regulation, the most important regulatory mechanism of these opposing activities is by phosphorylation and dephosphorylation of the enzyme. In terms of biological role, synthesis and degradation of fructose 2,6-bisphosphate. The protein is 6-phosphofructo-2-kinase/fructose-2,6-bisphosphatase 4 (Pfkfb4) of Rattus norvegicus (Rat).